Consider the following 383-residue polypeptide: Deoxyguanosinetriphosphate triphosphohydrolase-like protein (383 aa).

The 137-residue stretch at 62 to 198 (RLTHSLEVST…AALADDISYI (137 aa)) folds into the HD domain.

The protein belongs to the dGTPase family. Type 2 subfamily.

The protein is Deoxyguanosinetriphosphate triphosphohydrolase-like protein of Rickettsia bellii (strain RML369-C).